Reading from the N-terminus, the 315-residue chain is Neuroguidin (315 aa).

Disordered regions lie at residues 127-201 and 289-315; these read SEND…KQKR and VQDIGNPKPKKKKIIKKGKKKVFRKRK. Composition is skewed to basic and acidic residues over residues 159–168 and 182–200; these read KTKEQKEPSG and YDGDLTEADRQKERVEKQK. Positions 181–206 form a coiled coil; sequence HYDGDLTEADRQKERVEKQKRAALRS. Residues 296-315 show a composition bias toward basic residues; it reads KPKKKKIIKKGKKKVFRKRK.

Belongs to the SAS10 family. Part of the small subunit (SSU) processome, composed of more than 70 proteins and the RNA chaperone small nucleolar RNA (snoRNA) U3.

The protein resides in the nucleus. Its subcellular location is the nucleolus. The protein localises to the chromosome. It localises to the centromere. It is found in the cytoplasm. The protein resides in the cell projection. Its subcellular location is the axon. The protein localises to the dendrite. It localises to the filopodium. Part of the small subunit (SSU) processome, first precursor of the small eukaryotic ribosomal subunit. During the assembly of the SSU processome in the nucleolus, many ribosome biogenesis factors, an RNA chaperone and ribosomal proteins associate with the nascent pre-rRNA and work in concert to generate RNA folding, modifications, rearrangements and cleavage as well as targeted degradation of pre-ribosomal RNA by the RNA exosome. Its dissociation from the complex determines the transition from state pre-A1 to state pre-A1*. May inhibit mRNA translation. The protein is Neuroguidin (ngdn) of Danio rerio (Zebrafish).